The sequence spans 81 residues: Envelope small membrane protein (81 aa).

At M1 to I19 the chain is on the virion surface side. The helical transmembrane segment at I20–I40 threads the bilayer. The Intravirion portion of the chain corresponds to K41 to V81.

This sequence belongs to the alphacoronaviruses E protein family. In terms of assembly, homopentamer. Interacts with membrane protein M in the budding compartment of the host cell, which is located between endoplasmic reticulum and the Golgi complex. Interacts with Nucleoprotein.

The protein resides in the host Golgi apparatus membrane. Its function is as follows. Plays a central role in virus morphogenesis and assembly. Acts as a viroporin and self-assembles in host membranes forming pentameric protein-lipid pores that allow ion transport. Also plays a role in the induction of apoptosis. The chain is Envelope small membrane protein from Porcine transmissible gastroenteritis coronavirus (strain FS772/70) (TGEV).